A 254-amino-acid polypeptide reads, in one-letter code: 3-deoxy-manno-octulosonate cytidylyltransferase (254 aa).

Belongs to the KdsB family.

It localises to the cytoplasm. It carries out the reaction 3-deoxy-alpha-D-manno-oct-2-ulosonate + CTP = CMP-3-deoxy-beta-D-manno-octulosonate + diphosphate. The protein operates within nucleotide-sugar biosynthesis; CMP-3-deoxy-D-manno-octulosonate biosynthesis; CMP-3-deoxy-D-manno-octulosonate from 3-deoxy-D-manno-octulosonate and CTP: step 1/1. Activates KDO (a required 8-carbon sugar) for incorporation into bacterial lipopolysaccharide in Gram-negative bacteria. This chain is 3-deoxy-manno-octulosonate cytidylyltransferase, found in Lawsonia intracellularis (strain PHE/MN1-00).